Consider the following 88-residue polypeptide: ATP synthase epsilon chain (88 aa).

It belongs to the ATPase epsilon chain family. F-type ATPases have 2 components, CF(1) - the catalytic core - and CF(0) - the membrane proton channel. CF(1) has five subunits: alpha(3), beta(3), gamma(1), delta(1), epsilon(1). CF(0) has three main subunits: a, b and c.

The protein resides in the cell inner membrane. Produces ATP from ADP in the presence of a proton gradient across the membrane. This chain is ATP synthase epsilon chain (atpC), found in Chlorobaculum tepidum (strain ATCC 49652 / DSM 12025 / NBRC 103806 / TLS) (Chlorobium tepidum).